The chain runs to 4574 residues: E3 ubiquitin-protein ligase MYCBP2 (4574 aa).

Disordered regions lie at residues 92–115 and 599–620; these read RGKK…VKTR and SASK…PYKP. 4 RCC1 repeats span residues 591 to 646, 690 to 746, 943 to 993, and 995 to 1051; these read DGSV…IVTK, SGEV…MMCQ, NGDV…VLLM, and GQVF…LRID. Basic residues predominate over residues 611–620; sequence SRRQPKPYKP. An intrachain disulfide couples Cys1733 to Cys1850. 2 disordered regions span residues 1976–1998 and 2313–2332; these read APPT…EQGL and LQRL…LTFG. Composition is skewed to polar residues over residues 1981 to 1998 and 2317 to 2328; these read NPNQ…EQGL and PGTSSNSATGTD. One copy of the Filamin repeat lies at 2336–2417; that stretch reads APKLEATYEP…IHVTIDGIEI (82 aa). Disordered regions lie at residues 2613–2824, 2845–2922, 3085–3116, 3345–3365, and 3505–3526; these read GFDY…PSPH, SNDE…KQAM, SPGS…KAEV, PGSN…TDSD, and FETE…EQEK. Basic and acidic residues-rich tracts occupy residues 2639–2663 and 2678–2688; these read HRQE…KSKN and DTGKLRSDSHS. The span at 2716–2729 shows a compositional bias: polar residues; it reads NPGSRSSSPKQKTF. Over residues 2730–2745 the composition is skewed to low complexity; sequence TSGRSSPSSTSSPRSS. Composition is skewed to basic and acidic residues over residues 2761–2772, 2854–2864, and 2874–2883; these read VHLDPPRERSKS, SELHNAEEGSS, and PVKEELESRS. Basic residues-rich tracts occupy residues 2887-2900 and 3102-3111; these read VSRK…RPKK and KKTKKEKKKK. Basic and acidic residues predominate over residues 3515-3526; it reads NKGNKENLEQEK. The DOC domain occupies 3617 to 3795; sequence FNISVQSGYE…SVAQQKNCEA (179 aa). The tract at residues 3815 to 3841 is disordered; that stretch reads GDAEPTPEQEEKNLLSSPEGEDKAPSD. Residues Cys4324, Cys4327, Cys4342, His4344, His4347, Cys4350, Cys4371, Cys4374, Cys4440, and Cys4443 each contribute to the Zn(2+) site. Residues 4324 to 4375 form an RING-type; atypical zinc finger; the sequence is CMICFTEALSAAPAIQLDCSHVFHLQCTRRVLENRWLGPRITFGFMSCPICK. The tract at residues 4435 to 4572 is tandem cysteine domain; that stretch reads YAYYVCFKCK…LGCGVCRNAH (138 aa). The active site involves Cys4454. Zn(2+)-binding residues include Cys4471, Cys4474, Cys4483, His4486, Cys4495, Cys4498, and Cys4499. Residue Cys4506 is part of the active site. The Zn(2+) site is built by Cys4513, Cys4516, Cys4534, Cys4548, His4554, Cys4565, and Cys4568.

The protein belongs to the RING-Cys relay (RCR) family. In terms of tissue distribution, widely expressed when the visual system begins developing. In the eye, expressed in all cells, including retinal ganglion cells, with no obvious gradient.

The protein localises to the nucleus. The protein resides in the cell projection. It localises to the axon. It is found in the cytoplasm. Its subcellular location is the cytoskeleton. It catalyses the reaction [E2 ubiquitin-conjugating enzyme]-S-ubiquitinyl-L-cysteine + [acceptor protein]-L-threonine = [E2 ubiquitin-conjugating enzyme]-L-cysteine + [acceptor protein]-3-O-ubiquitinyl-L-threonine.. The protein operates within protein modification; protein ubiquitination. Functionally, atypical E3 ubiquitin-protein ligase which specifically mediates ubiquitination of threonine and serine residues on target proteins, instead of ubiquitinating lysine residues. Shows esterification activity towards both threonine and serine, with a preference for threonine, and acts via two essential catalytic cysteine residues that relay ubiquitin to its substrate via thioester intermediates. Interacts with the E2 enzymes UBE2D1, UBE2D3, UBE2E1 and UBE2L3. Plays a key role in neural development, probably by mediating ubiquitination of threonine residues on target proteins. Involved in different processes such as regulation of neurite outgrowth, synaptic growth, synaptogenesis and axon degeneration. Required in the visual system for correct fasciculation, targeting and mapping of retinal axons. Acts as a regulator of pteridine synthesis. May play a role in the regulation of the circadian clock gene expression. This is E3 ubiquitin-protein ligase MYCBP2 from Danio rerio (Zebrafish).